The sequence spans 215 residues: Peroxiredoxin 1 (215 aa).

The Thioredoxin domain maps to 1 to 157 (MKLYQKFPET…LLRITKAALV (157 aa)). Catalysis depends on Cys45, which acts as the Cysteine sulfenic acid (-SOH) intermediate. Position 120 (Arg120) interacts with substrate.

The protein belongs to the peroxiredoxin family. Prx6 subfamily. In terms of assembly, homodecamer. Pentamer of dimers that assemble into a ring structure.

The protein resides in the cytoplasm. It catalyses the reaction a hydroperoxide + [thioredoxin]-dithiol = an alcohol + [thioredoxin]-disulfide + H2O. Functionally, thiol-specific peroxidase that catalyzes the reduction of hydrogen peroxide and organic hydroperoxides to water and alcohols, respectively. Plays a role in cell protection against oxidative stress by detoxifying peroxides. The sequence is that of Peroxiredoxin 1 from Sulfuracidifex metallicus (Sulfolobus metallicus).